Reading from the N-terminus, the 202-residue chain is Glycerol-3-phosphate acyltransferase (202 aa).

Transmembrane regions (helical) follow at residues 3 to 23, 61 to 81, 87 to 107, 118 to 138, 144 to 164, and 167 to 187; these read NLIIYAFIYLLGSIPFGLILA, IATIILDFAKAAIPLLILKFL, LLWSVAVLAIFGHCFSIYLLF, GAMIVLLPLEVLTAFIVWVVI, ISSLASLAALLAFVISSFIFN, and LEIHTHAPVFIIAFIIIYKHL.

It belongs to the PlsY family. In terms of assembly, probably interacts with PlsX.

The protein localises to the cell inner membrane. It catalyses the reaction an acyl phosphate + sn-glycerol 3-phosphate = a 1-acyl-sn-glycero-3-phosphate + phosphate. It functions in the pathway lipid metabolism; phospholipid metabolism. Its function is as follows. Catalyzes the transfer of an acyl group from acyl-phosphate (acyl-PO(4)) to glycerol-3-phosphate (G3P) to form lysophosphatidic acid (LPA). This enzyme utilizes acyl-phosphate as fatty acyl donor, but not acyl-CoA or acyl-ACP. This Campylobacter jejuni subsp. jejuni serotype O:23/36 (strain 81-176) protein is Glycerol-3-phosphate acyltransferase.